Consider the following 621-residue polypeptide: Chaperone protein HscA homolog (621 aa).

Belongs to the heat shock protein 70 family.

Chaperone involved in the maturation of iron-sulfur cluster-containing proteins. Has a low intrinsic ATPase activity which is markedly stimulated by HscB. The polypeptide is Chaperone protein HscA homolog (Polynucleobacter asymbioticus (strain DSM 18221 / CIP 109841 / QLW-P1DMWA-1) (Polynucleobacter necessarius subsp. asymbioticus)).